A 762-amino-acid polypeptide reads, in one-letter code: 5-methyltetrahydropteroyltriglutamate--homocysteine methyltransferase (762 aa).

Residues Arg-17–Lys-20 and Lys-111 contribute to the 5-methyltetrahydropteroyltri-L-glutamate site. Residues Ile-435–Ser-437 and Glu-488 each bind L-homocysteine. Residues Ile-435–Ser-437 and Glu-488 contribute to the L-methionine site. 5-methyltetrahydropteroyltri-L-glutamate-binding positions include Arg-519 to Cys-520 and Trp-565. Asp-603 is a binding site for L-homocysteine. Asp-603 is a binding site for L-methionine. Glu-609 is a binding site for 5-methyltetrahydropteroyltri-L-glutamate. Zn(2+) contacts are provided by His-645, Cys-647, and Glu-669. Catalysis depends on His-698, which acts as the Proton donor. Position 730 (Cys-730) interacts with Zn(2+).

The protein belongs to the vitamin-B12 independent methionine synthase family. Zn(2+) is required as a cofactor.

It carries out the reaction 5-methyltetrahydropteroyltri-L-glutamate + L-homocysteine = tetrahydropteroyltri-L-glutamate + L-methionine. It functions in the pathway amino-acid biosynthesis; L-methionine biosynthesis via de novo pathway; L-methionine from L-homocysteine (MetE route): step 1/1. In terms of biological role, catalyzes the transfer of a methyl group from 5-methyltetrahydrofolate to homocysteine resulting in methionine formation. This chain is 5-methyltetrahydropteroyltriglutamate--homocysteine methyltransferase, found in Bacillus cytotoxicus (strain DSM 22905 / CIP 110041 / 391-98 / NVH 391-98).